The following is a 391-amino-acid chain: 1-deoxy-D-xylulose 5-phosphate reductoisomerase (391 aa).

Positions 11, 12, 13, 14, 37, 39, and 125 each coordinate NADPH. Lys126 is a 1-deoxy-D-xylulose 5-phosphate binding site. Glu127 serves as a coordination point for NADPH. Residue Asp151 coordinates Mn(2+). 4 residues coordinate 1-deoxy-D-xylulose 5-phosphate: Ser152, Glu153, Ser176, and His199. Glu153 is a binding site for Mn(2+). Residue Gly205 coordinates NADPH. Ser212, Asn217, Lys218, and Glu221 together coordinate 1-deoxy-D-xylulose 5-phosphate. Glu221 contributes to the Mn(2+) binding site.

Belongs to the DXR family. The cofactor is Mg(2+). Mn(2+) serves as cofactor.

It catalyses the reaction 2-C-methyl-D-erythritol 4-phosphate + NADP(+) = 1-deoxy-D-xylulose 5-phosphate + NADPH + H(+). It functions in the pathway isoprenoid biosynthesis; isopentenyl diphosphate biosynthesis via DXP pathway; isopentenyl diphosphate from 1-deoxy-D-xylulose 5-phosphate: step 1/6. Catalyzes the NADPH-dependent rearrangement and reduction of 1-deoxy-D-xylulose-5-phosphate (DXP) to 2-C-methyl-D-erythritol 4-phosphate (MEP). This Heliobacterium modesticaldum (strain ATCC 51547 / Ice1) protein is 1-deoxy-D-xylulose 5-phosphate reductoisomerase.